Reading from the N-terminus, the 198-residue chain is Imidazoleglycerol-phosphate dehydratase (198 aa).

This sequence belongs to the imidazoleglycerol-phosphate dehydratase family.

The protein localises to the cytoplasm. It catalyses the reaction D-erythro-1-(imidazol-4-yl)glycerol 3-phosphate = 3-(imidazol-4-yl)-2-oxopropyl phosphate + H2O. The protein operates within amino-acid biosynthesis; L-histidine biosynthesis; L-histidine from 5-phospho-alpha-D-ribose 1-diphosphate: step 6/9. The polypeptide is Imidazoleglycerol-phosphate dehydratase (Nitratidesulfovibrio vulgaris (strain DP4) (Desulfovibrio vulgaris)).